A 102-amino-acid chain; its full sequence is Large ribosomal subunit protein bL21 (102 aa).

The protein belongs to the bacterial ribosomal protein bL21 family. In terms of assembly, part of the 50S ribosomal subunit. Contacts protein L20.

In terms of biological role, this protein binds to 23S rRNA in the presence of protein L20. This chain is Large ribosomal subunit protein bL21, found in Bacillus subtilis (strain 168).